Here is an 803-residue protein sequence, read N- to C-terminus: Ribonuclease II, chloroplastic/mitochondrial (803 aa).

The transit peptide at 1–35 (MMSVRAINGCSIIRTATSAGGPPVSLFRHRIQRLR) directs the protein to the chloroplast and mitochondrion. Residues 399–694 (RIDLTHLKVY…AHYQIKAFLR (296 aa)) enclose the RNB domain.

The protein belongs to the RNR ribonuclease family. In terms of tissue distribution, expressed in seedlings, roots, leaves and flowers.

Its subcellular location is the mitochondrion. The protein localises to the plastid. The protein resides in the chloroplast. The catalysed reaction is Exonucleolytic cleavage in the 3'- to 5'-direction to yield nucleoside 5'-phosphates.. In terms of biological role, 3'-5' exoribonuclease that catalyzes 3' maturation of chloroplast and mitochondrion ribosomal RNAs; degrades short nucleotidic extensions to generate the mature 3'-ends. Involved in the maturation of 23S, 16S and 5S rRNAs. This chain is Ribonuclease II, chloroplastic/mitochondrial (RNR1), found in Arabidopsis thaliana (Mouse-ear cress).